Consider the following 305-residue polypeptide: Pseudouridine-5'-phosphate glycosidase (305 aa).

The active-site Proton donor is E28. Positions 89 and 109 each coordinate substrate. D141 is a binding site for Mn(2+). Substrate is bound at residue 143 to 145 (SAD). The active-site Nucleophile is the K162.

This sequence belongs to the pseudouridine-5'-phosphate glycosidase family. Homotrimer. The cofactor is Mn(2+).

The catalysed reaction is D-ribose 5-phosphate + uracil = psi-UMP + H2O. In terms of biological role, catalyzes the reversible cleavage of pseudouridine 5'-phosphate (PsiMP) to ribose 5-phosphate and uracil. Functions biologically in the cleavage direction, as part of a pseudouridine degradation pathway. This chain is Pseudouridine-5'-phosphate glycosidase, found in Dinoroseobacter shibae (strain DSM 16493 / NCIMB 14021 / DFL 12).